Reading from the N-terminus, the 782-residue chain is General transcription and DNA repair factor IIH helicase/translocase subunit XPB (782 aa).

Over residues 1–11 (MGRKDKSDREK) the composition is skewed to basic and acidic residues. 2 disordered regions span residues 1–47 (MGRK…VDES) and 211–242 (TISS…SGTQ). A Nuclear localization signal motif is present at residues 6-17 (KSDREKKSKKRY). Acidic residues predominate over residues 19–28 (EDEEEDEEVI). The span at 211–223 (TISSKSAISKSQQ) shows a compositional bias: low complexity. Positions 224 to 242 (DNGGPSSSQPADGQRSGTQ) are enriched in polar residues. The 162-residue stretch at 326-487 (MFGNGRARSG…DLNFLIGPKL (162 aa)) folds into the Helicase ATP-binding domain. ATP is bound at residue 339-346 (LPCGAGKS). The DEVH box signature appears at 440 to 443 (DEVH). In terms of domain architecture, Helicase C-terminal spans 541-701 (RACQFLIRFH…LAGMEEEDLM (161 aa)).

This sequence belongs to the helicase family. RAD25/XPB subfamily. Component of the 7-subunit TFIIH core complex composed of XPB/ERCC3, XPD/ERCC2, GTF2H1, GTF2H2, GTF2H3, GTF2H4 and GTF2H5, which is active in NER. The core complex associates with the 3-subunit CDK-activating kinase (CAK) module composed of CCNH/cyclin H, CDK7 and MNAT1 to form the 10-subunit holoenzyme (holo-TFIIH) active in transcription. Interacts with PUF60. Interacts with ATF7IP. Interacts with Epstein-Barr virus EBNA2.

It localises to the nucleus. The catalysed reaction is Couples ATP hydrolysis with the unwinding of duplex DNA by translocating in the 3'-5' direction.. It carries out the reaction ATP + H2O = ADP + phosphate + H(+). In terms of biological role, ATP-dependent 3'-5' DNA helicase/translocase; binds dsDNA rather than ssDNA, unzipping it in a translocase rather than classical helicase activity. Component of the general transcription and DNA repair factor IIH (TFIIH) core complex. When complexed to CDK-activating kinase (CAK), involved in RNA transcription by RNA polymerase II. The ATPase activity of XPB/ERCC3, but not its helicase activity, is required for DNA opening; it may wrap around the damaged DNA wedging it open, causing localized melting and twisting that allows XPD/ERCC2 helicase to anchor. The ATP-dependent helicase activity of XPB/ERCC3 may be required for promoter escape. Also involved in transcription-coupled nucleotide excision repair (NER) of damaged DNA. In NER, TFIIH acts by opening DNA around the lesion to allow the excision of the damaged oligonucleotide and its replacement by a new DNA fragment. The chain is General transcription and DNA repair factor IIH helicase/translocase subunit XPB (ercc3) from Danio rerio (Zebrafish).